A 602-amino-acid chain; its full sequence is Beta-(1--&gt;2)glucan export ATP-binding/permease protein NdvA (602 aa).

In terms of domain architecture, ABC transmembrane type-1 spans 21-306; it reads GWLLAFANLL…VVSFINNVFM (286 aa). 6 consecutive transmembrane segments (helical) span residues 22 to 42, 63 to 83, 141 to 161, 163 to 183, 240 to 262, and 280 to 300; these read WLLA…PVLF, FLAA…LVAL, EHFA…YLNW, LAIL…FVVR, VLSW…VLAI, and IVMF…VVSF. The region spanning 340 to 573 is the ABC transporter domain; that stretch reads VEFNDVTFSY…GGHFAELARA (234 aa). 373–380 serves as a coordination point for ATP; the sequence is GPTGAGKS.

It belongs to the ABC transporter superfamily. Beta-(1--&gt;2)glucan exporter (TC 3.A.1.108.1) family. As to quaternary structure, homodimer.

Its subcellular location is the cell inner membrane. It carries out the reaction [(1-&gt;2)-beta-D-glucosyl](n)(in) + ATP + H2O = [(1-&gt;2)-beta-D-glucosyl](n)(out) + ADP + phosphate + H(+). Involved in beta-(1--&gt;2)glucan export. Transmembrane domains (TMD) form a pore in the inner membrane and the ATP-binding domain (NBD) is responsible for energy generation. The sequence is that of Beta-(1--&gt;2)glucan export ATP-binding/permease protein NdvA from Bradyrhizobium diazoefficiens (strain JCM 10833 / BCRC 13528 / IAM 13628 / NBRC 14792 / USDA 110).